Consider the following 850-residue polypeptide: Response regulator sskA (850 aa).

2 disordered regions span residues 1 to 225 (MPDR…GASS) and 419 to 542 (IPQR…GQSP). The span at 7-25 (SQLLKSKLLRRSSTTATTS) shows a compositional bias: low complexity. The segment covering 117–138 (GANSRQEGSQNGSIQQSPTFTR) has biased composition (polar residues). Residues 144 to 163 (QLTEEKDKGKLQSREGDQRG) show a composition bias toward basic and acidic residues. Polar residues predominate over residues 177 to 196 (SDPQYSLTTELANKPSTPQT). Residues 436 to 445 (HHSEPGEHGE) are compositionally biased toward basic and acidic residues. The segment covering 477–490 (PSISILTTDSNMAS) has biased composition (polar residues). Pro residues predominate over residues 492–511 (PQPPVAAPQVPTPPGPPPES). Residues 558–719 (NVLIVEDNII…WLEQKVTEWG (162 aa)) enclose the Response regulatory domain. Position 607 is a 4-aspartylphosphate (Asp-607). The disordered stretch occupies residues 736-850 (FADEPQSSSP…DEEQQALDAT (115 aa)). Over residues 762–782 (SSRTSTSPSSAAVNATARAFA) the composition is skewed to low complexity. Over residues 819–828 (TLDSPASPLT) the composition is skewed to polar residues. Residues 839 to 850 (PGDEEQQALDAT) are compositionally biased toward acidic residues.

The protein belongs to the SSK1 family.

The protein localises to the cytoplasm. In terms of biological role, final receptor of the osmolarity two-component system regulatory system, which controls activity of the sakA mitogen-activated protein kinase (MAPK) pathway in response to changes in the osmolarity of the extracellular environment. Regulates the germination in the airways that drives enhanced disease initiation and inflammation in the lungs. This is Response regulator sskA from Aspergillus fumigatus (strain ATCC MYA-4609 / CBS 101355 / FGSC A1100 / Af293) (Neosartorya fumigata).